The following is a 352-amino-acid chain: Mas-related G-protein coupled receptor member X2 (352 aa).

The Extracellular segment spans residues 1 to 45 (MEERNISGRDLRVDSNITYWGTNITAVNESNHTGMSFCEVVSCTM). Asparagine 5, asparagine 16, asparagine 23, asparagine 28, and asparagine 31 each carry an N-linked (GlcNAc...) asparagine glycan. The chain crosses the membrane as a helical span at residues 46–66 (VFLSLIVALVGLVGNATVLWF). The Cytoplasmic segment spans residues 67 to 75 (LGFQMRRNA). A helical transmembrane segment spans residues 76–96 (FSVYILNLAGADFLFICFQIG). Residues 97–107 (YCFHMILDIDS) are Extracellular-facing. The chain crosses the membrane as a helical span at residues 108-128 (IPIEIDLFYLVVLNFPYFCGL). Residues 129–155 (SILSAISIERCLSVMWPIWYHCQRPRH) are Cytoplasmic-facing. The chain crosses the membrane as a helical span at residues 156-176 (TSAVICTLLWVLSLVCSLLEG). At 177–195 (KECGFLYYTSDPGWCKTFD) the chain is on the extracellular side. The helical transmembrane segment at 196-216 (LITATWLIVLFVALLGSSLAL) threads the bilayer. At 217-239 (VITIFWGLHKIPVTRLYVAIVFT) the chain is on the cytoplasmic side. A helical transmembrane segment spans residues 240–260 (VLVFLLFGLPYGIYWFLLVWI). Residues 261 to 275 (EKFYYVLPCSIYPVT) are Extracellular-facing. Residues 276–296 (VFLSCVNSSAKPIIYCLVGSI) traverse the membrane as a helical segment. The Cytoplasmic segment spans residues 297-347 (RHHRFQRKTLKLFLQRAMQDTPEEEECGEMGSSGRSREIKTIWKGLRAALI).

It belongs to the G-protein coupled receptor 1 family. Mas subfamily.

Its subcellular location is the cell membrane. Orphan receptor. Probably involved in the function of nociceptive neurons. May regulate nociceptor function and/or development, including the sensation or modulation of pain. This is Mas-related G-protein coupled receptor member X2 (Mrgprx2) from Mus musculus (Mouse).